The sequence spans 168 residues: Chorismate pyruvate-lyase (168 aa).

Methionine 36, arginine 78, leucine 116, and glutamate 157 together coordinate substrate.

Belongs to the UbiC family. As to quaternary structure, monomer.

It is found in the cytoplasm. It catalyses the reaction chorismate = 4-hydroxybenzoate + pyruvate. It participates in cofactor biosynthesis; ubiquinone biosynthesis. In terms of biological role, removes the pyruvyl group from chorismate, with concomitant aromatization of the ring, to provide 4-hydroxybenzoate (4HB) for the ubiquinone pathway. The chain is Chorismate pyruvate-lyase from Photorhabdus laumondii subsp. laumondii (strain DSM 15139 / CIP 105565 / TT01) (Photorhabdus luminescens subsp. laumondii).